The following is a 214-amino-acid chain: ATP phosphoribosyltransferase (214 aa).

Belongs to the ATP phosphoribosyltransferase family. Short subfamily. In terms of assembly, heteromultimer composed of HisG and HisZ subunits.

It localises to the cytoplasm. It carries out the reaction 1-(5-phospho-beta-D-ribosyl)-ATP + diphosphate = 5-phospho-alpha-D-ribose 1-diphosphate + ATP. It functions in the pathway amino-acid biosynthesis; L-histidine biosynthesis; L-histidine from 5-phospho-alpha-D-ribose 1-diphosphate: step 1/9. Functionally, catalyzes the condensation of ATP and 5-phosphoribose 1-diphosphate to form N'-(5'-phosphoribosyl)-ATP (PR-ATP). Has a crucial role in the pathway because the rate of histidine biosynthesis seems to be controlled primarily by regulation of HisG enzymatic activity. This Azoarcus sp. (strain BH72) protein is ATP phosphoribosyltransferase.